A 146-amino-acid chain; its full sequence is UPF0260 protein SO_2573 (146 aa).

This sequence belongs to the UPF0260 family.

The polypeptide is UPF0260 protein SO_2573 (Shewanella oneidensis (strain ATCC 700550 / JCM 31522 / CIP 106686 / LMG 19005 / NCIMB 14063 / MR-1)).